The chain runs to 510 residues: Cytochrome P450 11B2, mitochondrial (510 aa).

A mitochondrion-targeting transit peptide spans 1 to 34; that stretch reads MGACDNDFIELHSRVTADVWLARPWQCLHRTRAL. Phe-391 provides a ligand contact to 21-hydroxyprogesterone. Residue Cys-457 participates in heme binding.

The protein belongs to the cytochrome P450 family. Heme is required as a cofactor. In terms of tissue distribution, adrenal cortex.

It localises to the mitochondrion inner membrane. It carries out the reaction a steroid + 2 reduced [adrenodoxin] + O2 + 2 H(+) = an 11beta-hydroxysteroid + 2 oxidized [adrenodoxin] + H2O. It catalyses the reaction 21-hydroxyprogesterone + 2 reduced [adrenodoxin] + O2 + 2 H(+) = corticosterone + 2 oxidized [adrenodoxin] + H2O. The enzyme catalyses corticosterone + 2 reduced [adrenodoxin] + O2 + 2 H(+) = 18-hydroxycorticosterone + 2 oxidized [adrenodoxin] + H2O. The catalysed reaction is 18-hydroxycorticosterone + 2 reduced [adrenodoxin] + O2 + 2 H(+) = aldosterone + 2 oxidized [adrenodoxin] + 2 H2O. It carries out the reaction 11-deoxycortisol + 2 reduced [adrenodoxin] + O2 + 2 H(+) = cortisol + 2 oxidized [adrenodoxin] + H2O. It catalyses the reaction cortisol + 2 reduced [adrenodoxin] + O2 + 2 H(+) = 18-hydroxycortisol + 2 oxidized [adrenodoxin] + H2O. The enzyme catalyses 21-hydroxyprogesterone + 2 reduced [adrenodoxin] + O2 + 2 H(+) = 18-hydroxy-11-deoxycorticosterone + 2 oxidized [adrenodoxin] + H2O. The catalysed reaction is 18-hydroxycortisol + 2 reduced [adrenodoxin] + O2 + 2 H(+) = 18-oxocortisol + 2 oxidized [adrenodoxin] + 2 H2O. It participates in steroid biosynthesis. Its function is as follows. A cytochrome P450 monooxygenase that catalyzes the biosynthesis of aldosterone, the main mineralocorticoid responsible for salt and water homeostasis. Catalyzes three sequential oxidative reactions of 11-deoxycorticosterone (21-hydroxyprogesterone), namely 11-beta hydroxylation, followed by two successive oxidations at C18 yielding 18-hydroxy and then 18-oxo intermediates (that do not leave the enzyme active site during the consecutive hydroxylation reactions), and end with the formation of aldosterone. Can also produce 18-hydroxycortisol and 18-oxocortisol, derived from successive oxidations of cortisol at C18, normally found at very low levels, but significantly increased in primary aldosteronism, the most common form of secondary hypertension. Mechanistically, uses molecular oxygen inserting one oxygen atom into a substrate and reducing the second into a water molecule. Two electrons are provided by NADPH via a two-protein mitochondrial transfer system comprising flavoprotein FDXR (adrenodoxin/ferredoxin reductase) and nonheme iron-sulfur protein FDX1 or FDX2 (adrenodoxin/ferredoxin). Could also be involved in the androgen metabolic pathway. The chain is Cytochrome P450 11B2, mitochondrial (Cyp11b2) from Rattus norvegicus (Rat).